The chain runs to 489 residues: Siroheme synthase (489 aa).

Residues 1–203 (MDFFPVFMRL…GREDAARETL (203 aa)) form a precorrin-2 dehydrogenase /sirohydrochlorin ferrochelatase region. Residues 22-23 (PV) and 43-44 (PA) contribute to the NAD(+) site. The interval 218-489 (GEVFLVGAGP…ARSSTEGAEA (272 aa)) is uroporphyrinogen-III C-methyltransferase. P227 contacts S-adenosyl-L-methionine. D250 acts as the Proton acceptor in catalysis. K272 functions as the Proton donor in the catalytic mechanism. Residues 303-305 (GGD), I308, 333-334 (TA), M385, and G414 contribute to the S-adenosyl-L-methionine site.

In the N-terminal section; belongs to the precorrin-2 dehydrogenase / sirohydrochlorin ferrochelatase family. This sequence in the C-terminal section; belongs to the precorrin methyltransferase family.

The catalysed reaction is uroporphyrinogen III + 2 S-adenosyl-L-methionine = precorrin-2 + 2 S-adenosyl-L-homocysteine + H(+). It carries out the reaction precorrin-2 + NAD(+) = sirohydrochlorin + NADH + 2 H(+). It catalyses the reaction siroheme + 2 H(+) = sirohydrochlorin + Fe(2+). Its pathway is cofactor biosynthesis; adenosylcobalamin biosynthesis; precorrin-2 from uroporphyrinogen III: step 1/1. It participates in cofactor biosynthesis; adenosylcobalamin biosynthesis; sirohydrochlorin from precorrin-2: step 1/1. It functions in the pathway porphyrin-containing compound metabolism; siroheme biosynthesis; precorrin-2 from uroporphyrinogen III: step 1/1. The protein operates within porphyrin-containing compound metabolism; siroheme biosynthesis; siroheme from sirohydrochlorin: step 1/1. Its pathway is porphyrin-containing compound metabolism; siroheme biosynthesis; sirohydrochlorin from precorrin-2: step 1/1. In terms of biological role, multifunctional enzyme that catalyzes the SAM-dependent methylations of uroporphyrinogen III at position C-2 and C-7 to form precorrin-2 via precorrin-1. Then it catalyzes the NAD-dependent ring dehydrogenation of precorrin-2 to yield sirohydrochlorin. Finally, it catalyzes the ferrochelation of sirohydrochlorin to yield siroheme. The polypeptide is Siroheme synthase (Thioalkalivibrio sulfidiphilus (strain HL-EbGR7)).